Consider the following 439-residue polypeptide: Hydrogenobyrinate a,c-diamide synthase (439 aa).

One can recognise a GATase cobBQ-type domain in the interval 247–439 (RIALAEDGAF…FFHAIARASA (193 aa)). The active-site Nucleophile is the cysteine 329.

The protein belongs to the CobB/CbiA family. Requires Mg(2+) as cofactor.

The catalysed reaction is hydrogenobyrinate + 2 L-glutamine + 2 ATP + 2 H2O = hydrogenobyrinate a,c-diamide + 2 L-glutamate + 2 ADP + 2 phosphate + 2 H(+). The protein operates within cofactor biosynthesis; adenosylcobalamin biosynthesis; cob(II)yrinate a,c-diamide from precorrin-2 (aerobic route): step 9/10. Its function is as follows. Catalyzes the ATP-dependent amidation of the two carboxylate groups at positions a and c of hydrogenobyrinate, using either L-glutamine or ammonia as the nitrogen source. This is Hydrogenobyrinate a,c-diamide synthase from Mesorhizobium japonicum (strain LMG 29417 / CECT 9101 / MAFF 303099) (Mesorhizobium loti (strain MAFF 303099)).